The sequence spans 162 residues: Ecotin (162 aa).

Residues Met-1 to Ala-18 form the signal peptide. Residues Cys-70 and Cys-107 are joined by a disulfide bond.

Belongs to the protease inhibitor I11 (ecotin) family. As to quaternary structure, homodimer.

It is found in the periplasm. In terms of biological role, general inhibitor of pancreatic serine proteases: inhibits chymotrypsin, trypsin, elastases, factor X, kallikrein as well as a variety of other proteases. This Salmonella arizonae (strain ATCC BAA-731 / CDC346-86 / RSK2980) protein is Ecotin.